The following is a 137-amino-acid chain: Profilin-3 (137 aa).

The protein belongs to the profilin family. As to quaternary structure, interacts with ACTRT3. Detected in round spermatids.

The protein resides in the cytoplasm. It localises to the cytoskeleton. It is found in the nucleus. In terms of biological role, binds to actin and affects the structure of the cytoskeleton. Slightly reduces actin polymerization. Binds to poly-L-proline, phosphatidylinositol 3-phosphate (PtdIns(3)P), phosphatidylinositol 4,5-bisphosphate (PtdIns(4,5)P2), and phosphatidylinositol 4-phosphate (PtdIns(4)P). May be involved in spermatogenesis. The sequence is that of Profilin-3 (Pfn3) from Rattus norvegicus (Rat).